We begin with the raw amino-acid sequence, 778 residues long: Phenylalanine--tRNA ligase beta subunit (778 aa).

A tRNA-binding domain is found at 39–150; the sequence is YEVPQKIVFG…GKYKIGEEVS (112 aa). The B5 domain occupies 391 to 467; that stretch reads HEDKIISLNK…RLVGIDNIPS (77 aa). 4 residues coordinate Mg(2+): D445, D451, E454, and E455. The 93-residue stretch at 686–778 folds into the FDX-ACB domain; that stretch reads SKYQASFRDL…LKNQLGVGIR (93 aa).

This sequence belongs to the phenylalanyl-tRNA synthetase beta subunit family. Type 1 subfamily. As to quaternary structure, tetramer of two alpha and two beta subunits. Mg(2+) serves as cofactor.

It is found in the cytoplasm. The catalysed reaction is tRNA(Phe) + L-phenylalanine + ATP = L-phenylalanyl-tRNA(Phe) + AMP + diphosphate + H(+). This Sulfurimonas denitrificans (strain ATCC 33889 / DSM 1251) (Thiomicrospira denitrificans (strain ATCC 33889 / DSM 1251)) protein is Phenylalanine--tRNA ligase beta subunit.